The primary structure comprises 320 residues: MSKVMTLKDAIAKYVHSGDHIALGGFTTDRKPYAAVFEILRQGITDLTGLGGAAGGDWDMLIGNGRVKAYINCYTANSGVTNVSRRFRKWFEAGKLTMEDYSQDVIYMMWHAAALGLPFLPVTLMQGSGLTDEWGISKEVRKTLDKVPDDKFKYIDNPFKPGEKVVAVPVPQVDVAIIHAQQASPDGTVRIWGGKFQDVDIAEAAKYTIVTCEEIISDEEIRRDPTKNDIPGMCVDAVVLAPYGAHPSQCYGLYDYDNPFLKVYDKVSKTQEDFDAFCKEWVFDLKDHDEYLNKLGATRLINLKVVPGLGYHIDMTKEDK.

This sequence belongs to the 3-oxoacid CoA-transferase subunit A family. Heterooctamer of four A and four B subunits.

The protein localises to the cytoplasm. The enzyme catalyses trans-glutaconate + acetyl-CoA = (2E)-glutaconyl-CoA + acetate. It functions in the pathway amino-acid degradation; L-glutamate degradation via hydroxyglutarate pathway; crotonoyl-CoA from L-glutamate: step 3/5. Its function is as follows. Catalyzes the transfer of the CoA moiety from acetyl-CoA to (R)-2-hydroxyglutarate and related compounds like glutaconate. In Acidaminococcus fermentans (strain ATCC 25085 / DSM 20731 / CCUG 9996 / CIP 106432 / VR4), this protein is Glutaconate CoA-transferase subunit A (gctA).